Consider the following 96-residue polypeptide: Large ribosomal subunit protein uL23 (96 aa).

Belongs to the universal ribosomal protein uL23 family. In terms of assembly, part of the 50S ribosomal subunit. Contacts protein L29, and trigger factor when it is bound to the ribosome.

One of the early assembly proteins it binds 23S rRNA. One of the proteins that surrounds the polypeptide exit tunnel on the outside of the ribosome. Forms the main docking site for trigger factor binding to the ribosome. This chain is Large ribosomal subunit protein uL23, found in Thermus thermophilus (strain ATCC BAA-163 / DSM 7039 / HB27).